A 351-amino-acid polypeptide reads, in one-letter code: MSRQINTPDWILHANAPLRELNTFHIQAQARWLLEIIHPTALPQALTHPHIVGLPILVLGSGSNVLFAADPEECVLRFVNREVTILEHRIDHTLVRAGAGMAWHDLVLWSLQQGLSGLENLALIPGTVGACSIQNIGAYGVQVEEFVHIVEAYDQTEGKFVRLTASECEFAYRNSRFKREPNRYLITAVEFRLPLLHELNLNYAGISEELEALQITLPEPCDVAQAVINLRRRKLPDPEVLSNAGSFFKNPHLPREQAEQLRQHHPTLPIYPGETPESNKLSAAWLIEQCGWKGIREGDAGVAPQHSLVLVNYGEATGAELLALARRIAASVQERFGVAIEPETRLIGAQW.

One can recognise an FAD-binding PCMH-type domain in the interval 25–196 (HIQAQARWLL…TAVEFRLPLL (172 aa)). R173 is an active-site residue. S246 serves as the catalytic Proton donor. E343 is an active-site residue.

This sequence belongs to the MurB family. It depends on FAD as a cofactor.

The protein localises to the cytoplasm. The enzyme catalyses UDP-N-acetyl-alpha-D-muramate + NADP(+) = UDP-N-acetyl-3-O-(1-carboxyvinyl)-alpha-D-glucosamine + NADPH + H(+). The protein operates within cell wall biogenesis; peptidoglycan biosynthesis. In terms of biological role, cell wall formation. The protein is UDP-N-acetylenolpyruvoylglucosamine reductase of Xylella fastidiosa (strain M23).